Consider the following 111-residue polypeptide: uncharacterized protein (111 aa).

The signal sequence occupies residues 1 to 18; sequence MGKSMEEGIFVKVFPSKA.

This is an uncharacterized protein from Acidianus convivator (ATV).